Reading from the N-terminus, the 760-residue chain is DEAD-box ATP-dependent RNA helicase 24 (760 aa).

2 disordered regions span residues 1–76 and 90–113; these read MSNR…GEVD and QEMKSAPPPKPKEKLERYKDDDDD. Residues 14–27 show a composition bias toward polar residues; it reads NRQTSYSFERSQAP. Acidic residues predominate over residues 41-64; that stretch reads NSEDADLDNIDYMENEEAEEDIEE. Positions 99 to 109 are enriched in basic and acidic residues; sequence KPKEKLERYKD. Phosphoserine is present on Ser160. The short motif at 228–256 is the Q motif element; sequence KTFEDCGFSSQIMSAIKKQAYEKPTAIQC. Positions 259–434 constitute a Helicase ATP-binding domain; the sequence is LPIVLSGRDV…REILSDPIRV (176 aa). 272–279 provides a ligand contact to ATP; sequence AKTGSGKT. The short motif at 382 to 385 is the DEAD box element; the sequence is DEAD. Positions 459-608 constitute a Helicase C-terminal domain; that stretch reads KLPWLLEKLP…NVPPELTDLA (150 aa). 3 disordered regions span residues 604-638, 647-666, and 706-760; these read LTDLAMKDGRFKSKRDGRKGGKKGRGGGGGNKGVR, GFSSESSRTPSSKAAPSRSG, and FVSG…GWDN. The segment covering 615–628 has biased composition (basic residues); the sequence is KSKRDGRKGGKKGR. The segment covering 629–638 has biased composition (gly residues); the sequence is GGGGGNKGVR. The span at 649 to 666 shows a compositional bias: polar residues; it reads SSESSRTPSSKAAPSRSG. Over residues 707–716 the composition is skewed to gly residues; that stretch reads VSGGTIGGDM. Positions 718 to 732 are enriched in polar residues; it reads RTQSQAPPVAPTQNA. A compositionally biased stretch (low complexity) spans 733–745; the sequence is SSHNSSQNHSQSS. The segment covering 750 to 760 has biased composition (basic residues); the sequence is RERKRRSGWDN.

The protein belongs to the DEAD box helicase family.

It catalyses the reaction ATP + H2O = ADP + phosphate + H(+). The chain is DEAD-box ATP-dependent RNA helicase 24 (RH24) from Arabidopsis thaliana (Mouse-ear cress).